A 71-amino-acid chain; its full sequence is Protein SlyX homolog (71 aa).

Belongs to the SlyX family.

The polypeptide is Protein SlyX homolog (Azotobacter vinelandii (strain DJ / ATCC BAA-1303)).